An 81-amino-acid chain; its full sequence is Small ribosomal subunit protein eS21 (81 aa).

This sequence belongs to the eukaryotic ribosomal protein eS21 family.

This Zea mays (Maize) protein is Small ribosomal subunit protein eS21 (RPS21).